Consider the following 158-residue polypeptide: NADH-quinone oxidoreductase subunit B (158 aa).

The [4Fe-4S] cluster site is built by Cys37, Cys38, Cys102, and Cys132.

This sequence belongs to the complex I 20 kDa subunit family. As to quaternary structure, NDH-1 is composed of 14 different subunits. Subunits NuoB, C, D, E, F, and G constitute the peripheral sector of the complex. [4Fe-4S] cluster serves as cofactor.

It localises to the cell inner membrane. The enzyme catalyses a quinone + NADH + 5 H(+)(in) = a quinol + NAD(+) + 4 H(+)(out). In terms of biological role, NDH-1 shuttles electrons from NADH, via FMN and iron-sulfur (Fe-S) centers, to quinones in the respiratory chain. The immediate electron acceptor for the enzyme in this species is believed to be ubiquinone. Couples the redox reaction to proton translocation (for every two electrons transferred, four hydrogen ions are translocated across the cytoplasmic membrane), and thus conserves the redox energy in a proton gradient. The chain is NADH-quinone oxidoreductase subunit B from Acidithiobacillus ferrooxidans (strain ATCC 23270 / DSM 14882 / CIP 104768 / NCIMB 8455) (Ferrobacillus ferrooxidans (strain ATCC 23270)).